The following is a 513-amino-acid chain: Cytochrome P450 1A2 (513 aa).

Residue Ser68 is glycosylated (O-linked (GlcNAc) serine). Residue Cys456 coordinates heme.

It belongs to the cytochrome P450 family. As to quaternary structure, interacts with PGRMC1; the interaction requires PGRMC1 homodimerization. Requires heme as cofactor.

The protein localises to the endoplasmic reticulum membrane. It localises to the microsome membrane. It carries out the reaction an organic molecule + reduced [NADPH--hemoprotein reductase] + O2 = an alcohol + oxidized [NADPH--hemoprotein reductase] + H2O + H(+). The enzyme catalyses 17beta-estradiol + reduced [NADPH--hemoprotein reductase] + O2 = 2-hydroxy-17beta-estradiol + oxidized [NADPH--hemoprotein reductase] + H2O + H(+). The catalysed reaction is 17beta-estradiol + reduced [NADPH--hemoprotein reductase] + O2 = 4-hydroxy-17beta-estradiol + oxidized [NADPH--hemoprotein reductase] + H2O + H(+). It catalyses the reaction estrone + reduced [NADPH--hemoprotein reductase] + O2 = 2-hydroxyestrone + oxidized [NADPH--hemoprotein reductase] + H2O + H(+). It carries out the reaction estrone + reduced [NADPH--hemoprotein reductase] + O2 = 4-hydroxyestrone + oxidized [NADPH--hemoprotein reductase] + H2O + H(+). The enzyme catalyses cholesterol + reduced [NADPH--hemoprotein reductase] + O2 = 25-hydroxycholesterol + oxidized [NADPH--hemoprotein reductase] + H2O + H(+). The catalysed reaction is all-trans-retinol + reduced [NADPH--hemoprotein reductase] + O2 = all-trans-retinal + oxidized [NADPH--hemoprotein reductase] + 2 H2O + H(+). It catalyses the reaction all-trans-retinal + reduced [NADPH--hemoprotein reductase] + O2 = all-trans-retinoate + oxidized [NADPH--hemoprotein reductase] + H2O + 2 H(+). It carries out the reaction (5Z,8Z,11Z,14Z)-eicosatetraenoate + reduced [NADPH--hemoprotein reductase] + O2 = (14R,15S)-epoxy-(5Z,8Z,11Z)-eicosatrienoate + oxidized [NADPH--hemoprotein reductase] + H2O + H(+). The enzyme catalyses (5Z,8Z,11Z,14Z)-eicosatetraenoate + reduced [NADPH--hemoprotein reductase] + O2 = (14S,15R)-epoxy-(5Z,8Z,11Z)-eicosatrienoate + oxidized [NADPH--hemoprotein reductase] + H2O + H(+). The catalysed reaction is (5Z,8Z,11Z,14Z,17Z)-eicosapentaenoate + reduced [NADPH--hemoprotein reductase] + O2 = (17R,18S)-epoxy-(5Z,8Z,11Z,14Z)-eicosatetraenoate + oxidized [NADPH--hemoprotein reductase] + H2O + H(+). It catalyses the reaction (4Z,7Z,10Z,13Z,16Z,19Z)-docosahexaenoate + reduced [NADPH--hemoprotein reductase] + O2 = (19R,20S)-epoxy-(4Z,7Z,10Z,13Z,16Z)-docosapentaenoate + oxidized [NADPH--hemoprotein reductase] + H2O + H(+). It carries out the reaction (5S)-hydroperoxy-(6E,8Z,11Z,14Z)-eicosatetraenoate = 5-oxo-(6E,8Z,11Z,14Z)-eicosatetraenoate + H2O. The enzyme catalyses (12S)-hydroperoxy-(5Z,8Z,10E,14Z)-eicosatetraenoate = 12-oxo-(5Z,8Z,10E,14Z)-eicosatetraenoate + H2O. The catalysed reaction is (15S)-hydroperoxy-(5Z,8Z,11Z,13E)-eicosatetraenoate = 15-oxo-(5Z,8Z,11Z,13E)-eicosatetraenoate + H2O. It catalyses the reaction (13S)-hydroperoxy-(9Z,11E)-octadecadienoate = 13-oxo-(9Z,11E)-octadecadienoate + H2O. It carries out the reaction (5Z,8Z,11Z,14Z)-eicosatetraenoate + reduced [NADPH--hemoprotein reductase] + O2 = 13-hydroxy-(5Z,8Z,11Z,14Z)-eicosatetraenoate + oxidized [NADPH--hemoprotein reductase] + H2O + H(+). The enzyme catalyses (5Z,8Z,11Z,14Z)-eicosatetraenoate + reduced [NADPH--hemoprotein reductase] + O2 = 19-hydroxy-(5Z,8Z,11Z,14Z)-eicosatetraenoate + oxidized [NADPH--hemoprotein reductase] + H2O + H(+). The catalysed reaction is (9Z,12Z)-octadecadienoate + reduced [NADPH--hemoprotein reductase] + O2 = 11-hydroxy-(9Z,12Z)-octadecadienoate + oxidized [NADPH--hemoprotein reductase] + H2O + H(+). It functions in the pathway cofactor metabolism; retinol metabolism. It participates in steroid metabolism; cholesterol metabolism. The protein operates within lipid metabolism; arachidonate metabolism. A cytochrome P450 monooxygenase involved in the metabolism of various endogenous substrates, including fatty acids, steroid hormones and vitamins. Mechanistically, uses molecular oxygen inserting one oxygen atom into a substrate, and reducing the second into a water molecule, with two electrons provided by NADPH via cytochrome P450 reductase (NADPH--hemoprotein reductase). Catalyzes the hydroxylation of carbon-hydrogen bonds. Exhibits high catalytic activity for the formation of hydroxyestrogens from estrone (E1) and 17beta-estradiol (E2), namely 2-hydroxy E1 and E2. Metabolizes cholesterol toward 25-hydroxycholesterol, a physiological regulator of cellular cholesterol homeostasis. May act as a major enzyme for all-trans retinoic acid biosynthesis in the liver. Catalyzes two successive oxidative transformation of all-trans retinol to all-trans retinal and then to the active form all-trans retinoic acid. Primarily catalyzes stereoselective epoxidation of the last double bond of polyunsaturated fatty acids (PUFA), displaying a strong preference for the (R,S) stereoisomer. Catalyzes bisallylic hydroxylation and omega-1 hydroxylation of PUFA. May also participate in eicosanoids metabolism by converting hydroperoxide species into oxo metabolites (lipoxygenase-like reaction, NADPH-independent). Plays a role in the oxidative metabolism of xenobiotics. Catalyzes the N-hydroxylation of heterocyclic amines and the O-deethylation of phenacetin. Metabolizes caffeine via N3-demethylation. The polypeptide is Cytochrome P450 1A2 (Cyp1a2) (Rattus norvegicus (Rat)).